A 292-amino-acid chain; its full sequence is Protease HtpX (292 aa).

Helical transmembrane passes span 4 to 24 (IVLF…ILFL) and 32 to 52 (IYGL…LSLI). Histidine 139 is a binding site for Zn(2+). Glutamate 140 is an active-site residue. Histidine 143 contributes to the Zn(2+) binding site. Helical transmembrane passes span 147-167 (GDMI…IFIS) and 193-213 (FVYF…ASII). Glutamate 222 lines the Zn(2+) pocket.

The protein belongs to the peptidase M48B family. Requires Zn(2+) as cofactor.

The protein resides in the cell membrane. The protein is Protease HtpX of Buchnera aphidicola subsp. Acyrthosiphon pisum (strain 5A).